A 134-amino-acid polypeptide reads, in one-letter code: Cytochrome b (134 aa).

3 helical membrane passes run 33–53 (FGSL…FLAI), 77–98 (WLLR…YLHV), and 113–133 (WNIG…GYVL). Residues His-83 and His-97 each coordinate heme b.

The protein belongs to the cytochrome b family. The cytochrome bc1 complex contains 11 subunits: 3 respiratory subunits (MT-CYB, CYC1 and UQCRFS1), 2 core proteins (UQCRC1 and UQCRC2) and 6 low-molecular weight proteins (UQCRH/QCR6, UQCRB/QCR7, UQCRQ/QCR8, UQCR10/QCR9, UQCR11/QCR10 and a cleavage product of UQCRFS1). This cytochrome bc1 complex then forms a dimer. Heme b serves as cofactor.

The protein localises to the mitochondrion inner membrane. Functionally, component of the ubiquinol-cytochrome c reductase complex (complex III or cytochrome b-c1 complex) that is part of the mitochondrial respiratory chain. The b-c1 complex mediates electron transfer from ubiquinol to cytochrome c. Contributes to the generation of a proton gradient across the mitochondrial membrane that is then used for ATP synthesis. This is Cytochrome b (MT-CYB) from Platyrrhinus helleri (Heller's broad-nosed bat).